The primary structure comprises 345 residues: Probable glucan endo-1,3-beta-glucosidase BG4 (345 aa).

Residues Met-1–Ser-22 form the signal peptide. N-linked (GlcNAc...) asparagine glycans are attached at residues Asn-23 and Asn-119. The Proton donor role is filled by Glu-128. The Nucleophile role is filled by Glu-267. N-linked (GlcNAc...) asparagine glycosylation is found at Asn-277 and Asn-306.

Belongs to the glycosyl hydrolase 17 family.

The protein localises to the secreted. The catalysed reaction is Hydrolysis of (1-&gt;3)-beta-D-glucosidic linkages in (1-&gt;3)-beta-D-glucans.. Functionally, may play a role in plant defense against pathogens. This chain is Probable glucan endo-1,3-beta-glucosidase BG4, found in Arabidopsis thaliana (Mouse-ear cress).